The sequence spans 147 residues: Interleukin-4 (147 aa).

A signal peptide spans 1 to 24 (MGLPAQLPVTLLCLLAGTAHFIQG). C48 and C88 are disulfide-bonded. N62 carries an N-linked (GlcNAc...) asparagine glycan.

It belongs to the IL-4/IL-13 family.

It localises to the secreted. Functionally, participates in at least several B-cell activation processes as well as of other cell types. It is a costimulator of DNA-synthesis. It induces the expression of class II MHC molecules on resting B-cells. It enhances both secretion and cell surface expression of IgE and IgG1. It also regulates the expression of the low affinity Fc receptor for IgE (CD23) on both lymphocytes and monocytes. Positively regulates IL31RA expression in macrophages. Stimulates autophagy in dendritic cells by interfering with mTORC1 signaling and through the induction of RUFY4. This Oryctolagus cuniculus (Rabbit) protein is Interleukin-4 (IL4).